The sequence spans 448 residues: Methylenetetrahydrofolate--tRNA-(uracil-5-)-methyltransferase TrmFO (448 aa).

An FAD-binding site is contributed by 13 to 18 (GAGLAG).

It belongs to the MnmG family. TrmFO subfamily. FAD serves as cofactor.

It is found in the cytoplasm. The catalysed reaction is uridine(54) in tRNA + (6R)-5,10-methylene-5,6,7,8-tetrahydrofolate + NADH + H(+) = 5-methyluridine(54) in tRNA + (6S)-5,6,7,8-tetrahydrofolate + NAD(+). It carries out the reaction uridine(54) in tRNA + (6R)-5,10-methylene-5,6,7,8-tetrahydrofolate + NADPH + H(+) = 5-methyluridine(54) in tRNA + (6S)-5,6,7,8-tetrahydrofolate + NADP(+). Catalyzes the folate-dependent formation of 5-methyl-uridine at position 54 (M-5-U54) in all tRNAs. This Streptococcus pyogenes serotype M1 protein is Methylenetetrahydrofolate--tRNA-(uracil-5-)-methyltransferase TrmFO.